The sequence spans 427 residues: Glutamate-1-semialdehyde 2,1-aminomutase (427 aa).

K267 carries the post-translational modification N6-(pyridoxal phosphate)lysine.

It belongs to the class-III pyridoxal-phosphate-dependent aminotransferase family. HemL subfamily. As to quaternary structure, homodimer. Pyridoxal 5'-phosphate serves as cofactor.

The protein localises to the cytoplasm. The enzyme catalyses (S)-4-amino-5-oxopentanoate = 5-aminolevulinate. The protein operates within porphyrin-containing compound metabolism; protoporphyrin-IX biosynthesis; 5-aminolevulinate from L-glutamyl-tRNA(Glu): step 2/2. The sequence is that of Glutamate-1-semialdehyde 2,1-aminomutase from Sulfurihydrogenibium azorense (strain DSM 15241 / OCM 825 / Az-Fu1).